The chain runs to 448 residues: Chaperone SurA (448 aa).

The first 27 residues, 1-27, serve as a signal peptide directing secretion; sequence MKKTLRFAAVAAGLVASLITVAPSASA. PpiC domains lie at 185-288 and 301-399; these read QQDL…RLVD and IVQT…QVLG. The disordered stretch occupies residues 230–249; it reads LAKSQSEADDAKKGGDLGFK.

It localises to the periplasm. The enzyme catalyses [protein]-peptidylproline (omega=180) = [protein]-peptidylproline (omega=0). Functionally, chaperone involved in the correct folding and assembly of outer membrane proteins. Recognizes specific patterns of aromatic residues and the orientation of their side chains, which are found more frequently in integral outer membrane proteins. May act in both early periplasmic and late outer membrane-associated steps of protein maturation. This is Chaperone SurA from Burkholderia thailandensis (strain ATCC 700388 / DSM 13276 / CCUG 48851 / CIP 106301 / E264).